A 147-amino-acid polypeptide reads, in one-letter code: Large ribosomal subunit protein uL15 (147 aa).

The segment covering M1–S10 has biased composition (polar residues). A disordered region spans residues M1–R48. Over residues K11–G20 the composition is skewed to basic residues. Residues R21–S31 show a composition bias toward gly residues. Over residues G32–R47 the composition is skewed to basic residues.

This sequence belongs to the universal ribosomal protein uL15 family. In terms of assembly, part of the 50S ribosomal subunit.

In terms of biological role, binds to the 23S rRNA. The chain is Large ribosomal subunit protein uL15 from Buchnera aphidicola subsp. Baizongia pistaciae (strain Bp).